Consider the following 884-residue polypeptide: Exocyst complex component 2 (884 aa).

The span at 1-11 (MEENAQARERL) shows a compositional bias: basic and acidic residues. The disordered stretch occupies residues 1–27 (MEENAQARERLPPTVTGLSPTEGVPGT). The IPT/TIG domain occupies 13–98 (PTVTGLSPTE…GSSNVKFRVF (86 aa)). 2 coiled-coil regions span residues 178–206 (ADAT…SEEM) and 846–874 (NQRL…AENL).

It belongs to the SEC5 family. The exocyst complex is composed of sec-3/exoc1, sec-5/exoc2, sec-6/exoc3, sec-8/exoc4, sec-10/exoc5, sec-15/exoc6, exo-70/exoc7 and exo-84/exoc8.

Its function is as follows. Component of the exocyst complex involved in the docking of exocytic vesicles with fusion sites on the plasma membrane. The sequence is that of Exocyst complex component 2 (sec-5) from Caenorhabditis elegans.